Reading from the N-terminus, the 396-residue chain is Adenylyltransferase and sulfurtransferase UBA4 (396 aa).

ATP is bound by residues G51, D72, 79–83 (SNLHR), K95, and 139–140 (DG). Zn(2+)-binding residues include C180 and C183. The active-site Glycyl thioester intermediate; for adenylyltransferase activity is C197. Residues C257 and C260 each contribute to the Zn(2+) site. The Rhodanese domain occupies 305–394 (VSTKHILLDV…WAKNVDEKFP (90 aa)). C355 serves as the catalytic Cysteine persulfide intermediate; for sulfurtransferase activity.

In the N-terminal section; belongs to the HesA/MoeB/ThiF family. UBA4 subfamily. Requires Zn(2+) as cofactor.

Its subcellular location is the cytoplasm. The protein localises to the cytosol. Its pathway is tRNA modification; 5-methoxycarbonylmethyl-2-thiouridine-tRNA biosynthesis. In terms of biological role, plays a central role in 2-thiolation of mcm(5)S(2)U at tRNA wobble positions of cytosolic tRNA(Lys), tRNA(Glu) and tRNA(Gln). Acts by mediating the C-terminal thiocarboxylation of sulfur carrier URM1. Its N-terminus first activates URM1 as acyl-adenylate (-COAMP), then the persulfide sulfur on the catalytic cysteine is transferred to URM1 to form thiocarboxylation (-COSH) of its C-terminus. The reaction probably involves hydrogen sulfide that is generated from the persulfide intermediate and that acts as a nucleophile towards URM1. Subsequently, a transient disulfide bond is formed. Does not use thiosulfate as sulfur donor; NFS1 probably acting as a sulfur donor for thiocarboxylation reactions. Prior mcm(5) tRNA modification by the elongator complex is required for 2-thiolation. May also be involved in protein urmylation. The polypeptide is Adenylyltransferase and sulfurtransferase UBA4 (Yarrowia lipolytica (strain CLIB 122 / E 150) (Yeast)).